The chain runs to 254 residues: Hydroxyacylglutathione hydrolase (254 aa).

Residues His53, His55, Asp57, His58, His111, Asp128, and His166 each contribute to the Zn(2+) site.

The protein belongs to the metallo-beta-lactamase superfamily. Glyoxalase II family. Monomer. It depends on Zn(2+) as a cofactor.

It catalyses the reaction an S-(2-hydroxyacyl)glutathione + H2O = a 2-hydroxy carboxylate + glutathione + H(+). The protein operates within secondary metabolite metabolism; methylglyoxal degradation; (R)-lactate from methylglyoxal: step 2/2. In terms of biological role, thiolesterase that catalyzes the hydrolysis of S-D-lactoyl-glutathione to form glutathione and D-lactic acid. In Aeromonas salmonicida (strain A449), this protein is Hydroxyacylglutathione hydrolase.